Reading from the N-terminus, the 166-residue chain is Lipoprotein signal peptidase (166 aa).

A run of 4 helical transmembrane segments spans residues 11-31, 42-62, 67-87, and 90-110; these read VWLW…TLVV, LLPV…SFLS, WQRW…VWWL, and LPAT…GAIG. Residues Asp123 and Asp141 contribute to the active site. Residues 133–153 traverse the membrane as a helical segment; sequence HFPVFNVADCAICIGAALLLF.

This sequence belongs to the peptidase A8 family.

The protein localises to the cell inner membrane. It carries out the reaction Release of signal peptides from bacterial membrane prolipoproteins. Hydrolyzes -Xaa-Yaa-Zaa-|-(S,diacylglyceryl)Cys-, in which Xaa is hydrophobic (preferably Leu), and Yaa (Ala or Ser) and Zaa (Gly or Ala) have small, neutral side chains.. Its pathway is protein modification; lipoprotein biosynthesis (signal peptide cleavage). Its function is as follows. This protein specifically catalyzes the removal of signal peptides from prolipoproteins. The polypeptide is Lipoprotein signal peptidase (Pseudoalteromonas translucida (strain TAC 125)).